We begin with the raw amino-acid sequence, 125 residues long: Secretion system apparatus protein SsaO (125 aa).

The sequence is that of Secretion system apparatus protein SsaO (ssaO) from Salmonella typhimurium (strain LT2 / SGSC1412 / ATCC 700720).